The sequence spans 413 residues: Putative zinc finger protein B0310.2 (413 aa).

Disordered stretches follow at residues 130–151 (PIFSSDDSVKGMPSRKRAKRSL) and 259–290 (VESDEGEIEVSPSPSTGDITENESSSSSTGPM). Polar residues predominate over residues 270-281 (PSPSTGDITENE). 2 consecutive C2H2-type zinc fingers follow at residues 306–330 (FICMHNNCGKRFANKFLLKKHMFIH) and 336–358 (HTCPHCHKKFNRKDNLLRHKKTH).

It localises to the nucleus. The chain is Putative zinc finger protein B0310.2 from Caenorhabditis elegans.